The sequence spans 272 residues: Hemin import ATP-binding protein HmuV (272 aa).

The region spanning 2 to 255 is the ABC transporter domain; the sequence is LNAEHLHVAR…DLIERCYGFR (254 aa). ATP is bound at residue 34–41; the sequence is GRNGAGKS.

It belongs to the ABC transporter superfamily. Heme (hemin) importer (TC 3.A.1.14.5) family. As to quaternary structure, the complex is composed of two ATP-binding proteins (HmuV), two transmembrane proteins (HmuU) and a solute-binding protein (HmuT).

It localises to the cell inner membrane. Functionally, part of the ABC transporter complex HmuTUV involved in hemin import. Responsible for energy coupling to the transport system. In Burkholderia thailandensis (strain ATCC 700388 / DSM 13276 / CCUG 48851 / CIP 106301 / E264), this protein is Hemin import ATP-binding protein HmuV.